We begin with the raw amino-acid sequence, 421 residues long: Exoskeleton protein RP43 (421 aa).

An N-terminal signal peptide occupies residues 1-24; it reads MRVIFVISLVSFMFVTWQTNPVHC. 6 disulfides stabilise this stretch: cysteine 72/cysteine 104, cysteine 132/cysteine 154, cysteine 193/cysteine 219, cysteine 247/cysteine 269, cysteine 309/cysteine 335, and cysteine 362/cysteine 384. 3 CUB domains span residues 72–191, 193–306, and 309–421; these read CSKP…YSIV, CNSL…YSVP, and CSVV…YTTG.

In terms of tissue distribution, detected in vestimentum and trunk but not in opisthosome or obturaculum. In the vestimentum, expression is restricted to epithelial cells under apical cuticular plaques.

In terms of biological role, may play a role in protein-protein interactions during tube assembly. The chain is Exoskeleton protein RP43 from Riftia pachyptila (Vent tube worm).